Reading from the N-terminus, the 1406-residue chain is Ubiquitin carboxyl-terminal hydrolase 6 (1406 aa).

The 193-residue stretch at 100–292 folds into the Rab-GAP TBC domain; the sequence is GIPMNIRGPV…RLWDVYLVEG (193 aa). Residues 348 to 380 are disordered; the sequence is KLTRKQGDLPPPAKREQGSLAPRPVPASRGGKT. Residues 532 to 1369 enclose the USP domain; that stretch reads TGLSNLGNTC…SAYILFYEQQ (838 aa). Residue cysteine 541 is the Nucleophile of the active site. Residues 1120–1231 form a disordered region; that stretch reads HKPLTPQGDE…KKNLDASKEN (112 aa). Positions 1129–1155 are enriched in basic and acidic residues; the sequence is ELSKPRILAREVKKVDAQSSAGKEDML. Residues 1156-1197 show a composition bias toward low complexity; sequence LSKSPSSLSANISSSPKGSPSSSRKSGTSCPSSKNSSPNSSP. Histidine 1328 (proton acceptor) is an active-site residue. The interval 1384–1406 is disordered; that stretch reads KMADTSSTDEDSESDYEKYSMLQ.

It belongs to the peptidase C19 family. In terms of assembly, interacts with RAC1 and CDC42. Interacts (via Rab-GAP TBC domain) with ARF6. Interacts with calmodulin (CALM1, CALM2 and/or CALM3); the interaction is calcium-dependent. Post-translationally, monubiquitinated; ubiquitination is calmodulin and calcium dependent. In terms of tissue distribution, testis specific. Expressed in various cancer cell lines.

The protein resides in the cell membrane. Its subcellular location is the cytoplasm. It is found in the endosome. The enzyme catalyses Thiol-dependent hydrolysis of ester, thioester, amide, peptide and isopeptide bonds formed by the C-terminal Gly of ubiquitin (a 76-residue protein attached to proteins as an intracellular targeting signal).. Its function is as follows. Deubiquitinase with an ATP-independent isopeptidase activity, cleaving at the C-terminus of the ubiquitin moiety. Catalyzes its own deubiquitination. In vitro, isoform 2, but not isoform 3, shows deubiquitinating activity. Promotes plasma membrane localization of ARF6 and selectively regulates ARF6-dependent endocytic protein trafficking. Is able to initiate tumorigenesis by inducing the production of matrix metalloproteinases following NF-kappa-B activation. May act as a GTPase-activating protein for RAB3A. This chain is Ubiquitin carboxyl-terminal hydrolase 6 (USP6), found in Homo sapiens (Human).